Here is a 530-residue protein sequence, read N- to C-terminus: Sulfate adenylyltransferase (530 aa).

An N-terminal region spans residues 1–178 (MPIPAPHGGK…IQGLDYPTHY (178 aa)). Residues 179–410 (DYIPFRKTPT…LRESNPPRSK (232 aa)) are catalytic. Gln208 is a binding site for sulfate. Residues 208–211 (QTRN) and 304–307 (GRDH) contribute to the ATP site. Active-site residues include Thr209, Arg210, and Asn211. Residue Arg210 coordinates sulfate. Sulfate is bound at residue Ala308. Val348 contributes to the ATP binding site. The required for oligomerization; adenylyl-sulfate kinase-like stretch occupies residues 411–530 (QGFAIVIDSS…LVSQGFYQQS (120 aa)).

Belongs to the sulfate adenylyltransferase family. In terms of assembly, homohexamer. Dimer of trimers.

Its subcellular location is the cytoplasm. It carries out the reaction sulfate + ATP + H(+) = adenosine 5'-phosphosulfate + diphosphate. It participates in sulfur metabolism; hydrogen sulfide biosynthesis; sulfite from sulfate: step 1/3. Functionally, catalyzes the first intracellular reaction of sulfate assimilation, forming adenosine-5'-phosphosulfate (APS) from inorganic sulfate and ATP. Plays an important role in sulfate activation as a component of the biosynthesis pathway of sulfur-containing amino acids. The protein is Sulfate adenylyltransferase of Debaryomyces hansenii (strain ATCC 36239 / CBS 767 / BCRC 21394 / JCM 1990 / NBRC 0083 / IGC 2968) (Yeast).